Here is a 126-residue protein sequence, read N- to C-terminus: Glycine cleavage system H protein (126 aa).

The Lipoyl-binding domain maps to 22–104; the sequence is VATVGITEYA…YEKAWMVKIE (83 aa). Lys-63 is subject to N6-lipoyllysine.

This sequence belongs to the GcvH family. In terms of assembly, the glycine cleavage system is composed of four proteins: P, T, L and H. (R)-lipoate serves as cofactor.

The glycine cleavage system catalyzes the degradation of glycine. The H protein shuttles the methylamine group of glycine from the P protein to the T protein. Its function is as follows. Is also involved in protein lipoylation via its role as an octanoyl/lipoyl carrier protein intermediate. This Staphylococcus epidermidis (strain ATCC 12228 / FDA PCI 1200) protein is Glycine cleavage system H protein.